Here is a 434-residue protein sequence, read N- to C-terminus: Probable phosphoglucosamine mutase (434 aa).

Catalysis depends on Ser-91, which acts as the Phosphoserine intermediate. Residues Ser-91, Asp-229, Asp-231, and Asp-233 each contribute to the Mg(2+) site. A Phosphoserine modification is found at Ser-91.

It belongs to the phosphohexose mutase family. Mg(2+) serves as cofactor. In terms of processing, activated by phosphorylation.

The enzyme catalyses alpha-D-glucosamine 1-phosphate = D-glucosamine 6-phosphate. Catalyzes the conversion of glucosamine-6-phosphate to glucosamine-1-phosphate. The protein is Probable phosphoglucosamine mutase of Methanosarcina barkeri (strain Fusaro / DSM 804).